Consider the following 271-residue polypeptide: Dihydropteroate synthase type-2 (271 aa).

The Pterin-binding domain maps to 1-259 (MNKSLIIFGI…EPRPLRDGLA (259 aa)). N12 serves as a coordination point for 4-aminobenzoate. N12, F18, S51, and S52 together coordinate diphosphate. Mg(2+) is bound at residue N12. Residues S52, D85, N104, D174, F179, K213, and S214 each coordinate 7,8-dihydropteroate. Residues D85, N104, and D174 each coordinate (7,8-dihydropterin-6-yl)methyl diphosphate. 2 residues coordinate 6-hydroxymethyl-7,8-dihydropterin: N104 and D174. A (7,8-dihydropterin-6-yl)methyl diphosphate-binding site is contributed by K213. K213 serves as a coordination point for 6-hydroxymethyl-7,8-dihydropterin. R247 contacts 4-aminobenzoate. R247 and H249 together coordinate diphosphate. (7,8-dihydropterin-6-yl)methyl diphosphate is bound at residue 247 to 249 (RTH).

This sequence belongs to the DHPS family. As to quaternary structure, homodimer. Mg(2+) serves as cofactor.

The catalysed reaction is (7,8-dihydropterin-6-yl)methyl diphosphate + 4-aminobenzoate = 7,8-dihydropteroate + diphosphate. It participates in cofactor biosynthesis; tetrahydrofolate biosynthesis; 7,8-dihydrofolate from 2-amino-4-hydroxy-6-hydroxymethyl-7,8-dihydropteridine diphosphate and 4-aminobenzoate: step 1/2. Its function is as follows. Catalyzes the condensation of para-aminobenzoate (pABA) with 6-hydroxymethyl-7,8-dihydropterin diphosphate (DHPt-PP) to form 7,8-dihydropteroate (H2Pte), the immediate precursor of folate derivatives. Confers resistance to sulfonamide antibiotics, including sulfamethoxazole (SMX), sulfadiazine and sulfisoxazole. The type II enzyme is stable whereas type I DHPS loses its activity rapidly. The protein is Dihydropteroate synthase type-2 of Escherichia coli.